A 139-amino-acid chain; its full sequence is Large ribosomal subunit protein uL13 (139 aa).

It belongs to the universal ribosomal protein uL13 family. As to quaternary structure, part of the 50S ribosomal subunit.

In terms of biological role, this protein is one of the early assembly proteins of the 50S ribosomal subunit, although it is not seen to bind rRNA by itself. It is important during the early stages of 50S assembly. The sequence is that of Large ribosomal subunit protein uL13 from Methanococcoides burtonii (strain DSM 6242 / NBRC 107633 / OCM 468 / ACE-M).